The chain runs to 337 residues: MSDLPFTLDQLRILKAIAVEGSFKRAADSLYVSQPAVSLQVQNLERQLDVPLFDRGGRRAQLTEAGHLLLNYGEKILSLCQETCRAIEDLQNLQGGTLIVGASQTTGTYLLPKMIGMFRQKYPDVAVQLHVHSTRRTAWSVANGQVDLAIIGGEIPGELTESLEIIPYAEDELALILPVFHPFTKQETIQKEDLYKLQFITLDSQSTIRKVIDQVLSRSEIDTRRFKIEMELNSIEAIKNAVQSGLGAAFVSTSAIAKELQMGVLHCTPIDGVVIKRTLWLIFNPNRYRSKAAEAFSQEILPQFATPDWNQDVLKLVQKKLVVNVLDAAIPNTSDDG.

Residues 6–63 (FTLDQLRILKAIAVEGSFKRAADSLYVSQPAVSLQVQNLERQLDVPLFDRGGRRAQLT) enclose the HTH lysR-type domain. The H-T-H motif DNA-binding region spans 23–42 (FKRAADSLYVSQPAVSLQVQ).

This sequence belongs to the LysR transcriptional regulatory family.

Trans-acting transcriptional regulator of RuBisCO genes (rbcL and rbcS) expression. This chain is Probable RuBisCO transcriptional regulator (rbcR), found in Trichormus variabilis (strain ATCC 29413 / PCC 7937) (Anabaena variabilis).